Reading from the N-terminus, the 3801-residue chain is Lysosomal-trafficking regulator (3801 aa).

Residues 148–173 form a disordered region; it reads KITHRYSVRDARKTQLSTSDSEANSD. Residue Ser-164 is modified to Phosphoserine. A Phosphothreonine modification is found at Thr-165. Position 166 is a phosphoserine (Ser-166). The WD 1 repeat unit spans residues 662 to 700; the sequence is ELSSSLSSPSYRFQGILPSSGSEDLLWKWDALKAYQNFV. Residues 1181 to 1190 are compositionally biased toward basic and acidic residues; it reads AMTEKSHQSA. Disordered regions lie at residues 1181–1203 and 1221–1256; these read AMTE…FSEE and YEAD…SPND. Positions 1221–1238 are enriched in acidic residues; the sequence is YEADSESNPEDGETQDDG. The segment covering 1246–1256 has biased composition (polar residues); the sequence is EGFSASSSPND. Phosphoserine occurs at positions 1509 and 1510. A WD 2 repeat occupies 1582-1626; the sequence is SQENIFLPSKWQHLVLTYLQQPQGKRRIHGKISIWVSGQRKPDVT. 5 positions are modified to phosphoserine: Ser-2105, Ser-2124, Ser-2213, Ser-2217, and Ser-2264. Positions 2205 to 2215 are enriched in basic and acidic residues; it reads KQLGAEPRSED. Residues 2205-2224 form a disordered region; sequence KQLGAEPRSEDDSPGDESCP. The 107-residue stretch at 3009–3115 folds into the BEACH-type PH domain; that stretch reads AASESIRVNR…VRDDVYHNIL (107 aa). Residues 3120–3422 form the BEACH domain; it reads PNLLEYGNIT…QLFHMAHVSR (303 aa). WD repeat units follow at residues 3563–3602, 3614–3653, 3656–3699, 3700–3744, and 3749–3788; these read SQQY…STPS, GHTE…YVQS, GHKS…VGHV, HCRE…PVRE, and KSNK…RLKQ.

In terms of assembly, interacts with CPAP, LIP8 and ZNF521. In terms of tissue distribution, abundantly expressed in adult and fetal thymus, peripheral blood leukocytes, bone marrow and several regions of the adult brain.

It localises to the cytoplasm. In terms of biological role, adapter protein that regulates and/or fission of intracellular vesicles such as lysosomes. Might regulate trafficking of effectors involved in exocytosis. In cytotoxic T-cells and natural killer (NK) cells, has role in the regulation of size, number and exocytosis of lytic granules. In macrophages and dendritic cells, regulates phagosome maturation by controlling the conversion of early phagosomal compartments into late phagosomes. In macrophages and dendritic cells, specifically involved in TLR3- and TLR4-induced production of pro-inflammatory cytokines by regulating the endosomal TLR3- TICAM1/TRIF and TLR4- TICAM1/TRIF signaling pathways. The sequence is that of Lysosomal-trafficking regulator (LYST) from Homo sapiens (Human).